The primary structure comprises 319 residues: 33 kDa chaperonin (319 aa).

The segment covering M1–L10 has biased composition (basic and acidic residues). Residues M1 to P25 form a disordered region. 2 cysteine pairs are disulfide-bonded: C261–C263 and C294–C297.

Belongs to the HSP33 family. In terms of processing, under oxidizing conditions two disulfide bonds are formed involving the reactive cysteines. Under reducing conditions zinc is bound to the reactive cysteines and the protein is inactive.

It localises to the cytoplasm. Its function is as follows. Redox regulated molecular chaperone. Protects both thermally unfolding and oxidatively damaged proteins from irreversible aggregation. Plays an important role in the bacterial defense system toward oxidative stress. This Synechococcus sp. (strain JA-2-3B'a(2-13)) (Cyanobacteria bacterium Yellowstone B-Prime) protein is 33 kDa chaperonin.